A 396-amino-acid chain; its full sequence is ATP-dependent RNA helicase eIF4A (396 aa).

The tract at residues 1–20 is disordered; it reads MADKGLEDVPEGQIESNYDE. The Q motif motif lies at 23 to 51; that stretch reads DSFDAMNLKAELLRGVYAYGFERPSAIQQ. The 171-residue stretch at 54-224 folds into the Helicase ATP-binding domain; sequence IMPVIKGHDV…TKFMRDPVRI (171 aa). 67–74 lines the ATP pocket; that stretch reads AQSGTGKT. The DEAD box motif lies at 172–175; it reads DEAD. One can recognise a Helicase C-terminal domain in the interval 235–396; the sequence is GIKQFYIAVE…EMPMNVADLI (162 aa).

This sequence belongs to the DEAD box helicase family. eIF4A subfamily. As to quaternary structure, component of the eIF4F complex, which composition varies with external and internal environmental conditions. It is composed of at least eIF4A, eIF4E and eIF4G.

The protein resides in the cytoplasm. It carries out the reaction ATP + H2O = ADP + phosphate + H(+). Functionally, ATP-dependent RNA helicase which is a subunit of the eIF4F complex involved in cap recognition and is required for mRNA binding to ribosome. In the current model of translation initiation, eIF4A unwinds RNA secondary structures in the 5'-UTR of mRNAs which is necessary to allow efficient binding of the small ribosomal subunit, and subsequent scanning for the initiator codon. The chain is ATP-dependent RNA helicase eIF4A (TIF1) from Phaeosphaeria nodorum (strain SN15 / ATCC MYA-4574 / FGSC 10173) (Glume blotch fungus).